We begin with the raw amino-acid sequence, 434 residues long: MIEKVYCQEVKPELDGKKVRLAGWVYTNMRVGKKIFLWIRDSTGIVQAVVAKNVVGEETFEKAKKLGRESSVIVEGIVKADERAPGGAEVHVEKLEVIQAVSEFPIPENPEQASPELLLDYRHLHIRTPKASAIMKVKETLIMAAREWLLKDGWHEVFPPILVTGAVEGGATLFKLKYFDKYAYLSQSAQLYLEAAIFGLEKVWSLTPSFRAEKSRTRRHLTEFWHLELEAAWMDLWDIMKVEEELVSYMVQRTLELRKKEIEMFRDDLTTLKNTEPPFPRISYDEAIDILQSKGVNVEWGDDLGADEERVLTEEFDRPFFVYGYPKHIKAFYMKEDPNDPRKVLASDMLAPEGYGEIIGGSQREDDYDKLLNRILEEGMDPKDYEWYLDLRRYGSVPHSGFGLGVERLVAWVLKLDHIRWAALFPRTPARLYP.

Belongs to the class-II aminoacyl-tRNA synthetase family.

It localises to the cytoplasm. It carries out the reaction tRNA(Asn) + L-asparagine + ATP = L-asparaginyl-tRNA(Asn) + AMP + diphosphate + H(+). In Pyrococcus horikoshii (strain ATCC 700860 / DSM 12428 / JCM 9974 / NBRC 100139 / OT-3), this protein is Asparagine--tRNA ligase.